A 506-amino-acid chain; its full sequence is D-alanine--D-alanyl carrier protein ligase (506 aa).

152-153 (TS) is a binding site for ATP. Residue D197 participates in D-alanine binding. Residue 292–297 (NTYGPT) coordinates ATP. V301 provides a ligand contact to D-alanine. Residues D383, 395–398 (YRGR), and K494 each bind ATP. K494 provides a ligand contact to D-alanine.

The protein belongs to the ATP-dependent AMP-binding enzyme family. DltA subfamily.

It is found in the cytoplasm. The enzyme catalyses holo-[D-alanyl-carrier protein] + D-alanine + ATP = D-alanyl-[D-alanyl-carrier protein] + AMP + diphosphate. Its pathway is cell wall biogenesis; lipoteichoic acid biosynthesis. Catalyzes the first step in the D-alanylation of lipoteichoic acid (LTA), the activation of D-alanine and its transfer onto the D-alanyl carrier protein (Dcp) DltC. In an ATP-dependent two-step reaction, forms a high energy D-alanyl-AMP intermediate, followed by transfer of the D-alanyl residue as a thiol ester to the phosphopantheinyl prosthetic group of the Dcp. D-alanylation of LTA plays an important role in modulating the properties of the cell wall in Gram-positive bacteria, influencing the net charge of the cell wall. This chain is D-alanine--D-alanyl carrier protein ligase, found in Lacticaseibacillus casei (strain BL23) (Lactobacillus casei).